The primary structure comprises 155 residues: MDKELKNNLEILLEEVAKEFNLKVYSLNLLTNQNPIIIKIIIKKTNEEDITIEDCSRFNNPASAVIENSNLLKCSYVLEISSQGVSDELTSERDFKTFKGFPVNVELNQKNSRIKLLNGLLYEKSKDYLAINIKGKIKKIPFNEVLKISLCTRQD.

It belongs to the RimP family.

It localises to the cytoplasm. Functionally, required for maturation of 30S ribosomal subunits. In Prochlorococcus marinus (strain MIT 9515), this protein is Ribosome maturation factor RimP.